The sequence spans 66 residues: MKKEIHPEYVECKVSCACGNSFTTKSNKPEIKVDICSSCHPFFTGSEKIVDAAGRVEKFKKKYAMQ.

4 residues coordinate Zn(2+): cysteine 16, cysteine 18, cysteine 36, and cysteine 39.

The protein belongs to the bacterial ribosomal protein bL31 family. Type A subfamily. As to quaternary structure, part of the 50S ribosomal subunit. The cofactor is Zn(2+).

Its function is as follows. Binds the 23S rRNA. In Campylobacter lari (strain RM2100 / D67 / ATCC BAA-1060), this protein is Large ribosomal subunit protein bL31.